The chain runs to 454 residues: Allantoinase (454 aa).

6 residues coordinate Zn(2+): H60, H62, K147, H183, H239, and D312. K147 is subject to N6-carboxylysine.

Belongs to the metallo-dependent hydrolases superfamily. Allantoinase family. Homotetramer. Zn(2+) serves as cofactor. Post-translationally, carboxylation allows a single lysine to coordinate two zinc ions.

The enzyme catalyses (S)-allantoin + H2O = allantoate + H(+). It participates in nitrogen metabolism; (S)-allantoin degradation; allantoate from (S)-allantoin: step 1/1. In terms of biological role, catalyzes the conversion of allantoin (5-ureidohydantoin) to allantoic acid by hydrolytic cleavage of the five-member hydantoin ring. This Rubrobacter xylanophilus (strain DSM 9941 / JCM 11954 / NBRC 16129 / PRD-1) protein is Allantoinase.